The primary structure comprises 364 residues: DNA polymerase IV (364 aa).

Positions I14–G198 constitute a UmuC domain. Positions 18 and 116 each coordinate Mg(2+). Residue E117 is part of the active site.

The protein belongs to the DNA polymerase type-Y family. In terms of assembly, monomer. It depends on Mg(2+) as a cofactor.

It is found in the cytoplasm. The catalysed reaction is DNA(n) + a 2'-deoxyribonucleoside 5'-triphosphate = DNA(n+1) + diphosphate. In terms of biological role, poorly processive, error-prone DNA polymerase involved in untargeted mutagenesis. Copies undamaged DNA at stalled replication forks, which arise in vivo from mismatched or misaligned primer ends. These misaligned primers can be extended by PolIV. Exhibits no 3'-5' exonuclease (proofreading) activity. May be involved in translesional synthesis, in conjunction with the beta clamp from PolIII. In Lactococcus lactis subsp. cremoris (strain MG1363), this protein is DNA polymerase IV.